A 323-amino-acid polypeptide reads, in one-letter code: Fructokinase-1 (323 aa).

The protein belongs to the carbohydrate kinase PfkB family. In terms of tissue distribution, expressed in stems, at higher levels in roots, and hardly detectable in leaves.

The catalysed reaction is D-fructose + ATP = D-fructose 6-phosphate + ADP + H(+). It participates in glycan biosynthesis; starch biosynthesis. Inhibited at high fructose. Its function is as follows. May play an important role in maintaining the flux of carbon towards starch formation in endosperm. May also be involved in a sugar-sensing pathway. This is Fructokinase-1 (FRK1) from Zea mays (Maize).